The sequence spans 277 residues: Urease accessory protein UreD (277 aa).

It belongs to the UreD family. In terms of assembly, ureD, UreF and UreG form a complex that acts as a GTP-hydrolysis-dependent molecular chaperone, activating the urease apoprotein by helping to assemble the nickel containing metallocenter of UreC. The UreE protein probably delivers the nickel.

The protein resides in the cytoplasm. Required for maturation of urease via the functional incorporation of the urease nickel metallocenter. In Yersinia pestis bv. Antiqua (strain Antiqua), this protein is Urease accessory protein UreD.